The chain runs to 241 residues: Pyrroloquinoline-quinone synthase (241 aa).

Belongs to the PqqC family.

The enzyme catalyses 6-(2-amino-2-carboxyethyl)-7,8-dioxo-1,2,3,4,7,8-hexahydroquinoline-2,4-dicarboxylate + 3 O2 = pyrroloquinoline quinone + 2 H2O2 + 2 H2O + H(+). Its pathway is cofactor biosynthesis; pyrroloquinoline quinone biosynthesis. Its function is as follows. Ring cyclization and eight-electron oxidation of 3a-(2-amino-2-carboxyethyl)-4,5-dioxo-4,5,6,7,8,9-hexahydroquinoline-7,9-dicarboxylic-acid to PQQ. The sequence is that of Pyrroloquinoline-quinone synthase from Ruegeria pomeroyi (strain ATCC 700808 / DSM 15171 / DSS-3) (Silicibacter pomeroyi).